Reading from the N-terminus, the 531-residue chain is GMP synthase [glutamine-hydrolyzing] (531 aa).

Residues 20–213 (KILIVDFGSQ…VRKVAGLKGD (194 aa)) form the Glutamine amidotransferase type-1 domain. C97 serves as the catalytic Nucleophile. Active-site residues include H187 and E189. A GMPS ATP-PPase domain is found at 214–406 (WTMRAFREEA…LGLPDVFVGR (193 aa)). ATP is bound at residue 241–247 (SGGVDSA).

As to quaternary structure, homodimer.

It catalyses the reaction XMP + L-glutamine + ATP + H2O = GMP + L-glutamate + AMP + diphosphate + 2 H(+). It functions in the pathway purine metabolism; GMP biosynthesis; GMP from XMP (L-Gln route): step 1/1. Its function is as follows. Catalyzes the synthesis of GMP from XMP. The chain is GMP synthase [glutamine-hydrolyzing] from Afipia carboxidovorans (strain ATCC 49405 / DSM 1227 / KCTC 32145 / OM5) (Oligotropha carboxidovorans).